The primary structure comprises 328 residues: MASSAASPSLSLLSFTSKPPYPSGSQRLFASFRTDGLFAPLTLKSRRGRGIVVKVDDVDADGGGADEYDMDDEEVEEVDNKKDYDVEYDPLAAAIAAAGGGGDGDIAFVQSKSFISTQGWDSDMVVDYRINEDEFHKLSLMDCDFFIRKPPDPDNDVYDFREMYVTPPDTDIYSIPRVLAPMPQKYIRCAMSDYGCYNVTEPPIDAPRDPLYKSEREISKVFLTKHYRNRRTNDPEFVLDLEEIYVIDSKTKSITRARVLVTVPGGRKRDRKDDLLVIRDNGTSFKIIHVGERDDPTTVIEREEWTKTREDMEKHLRKLRDFSVSNWF.

Positions 1-14 (MASSAASPSLSLLS) are enriched in low complexity. Residues 1 to 21 (MASSAASPSLSLLSFTSKPPY) form a disordered region. A chloroplast-targeting transit peptide spans 1 to 59 (MASSAASPSLSLLSFTSKPPYPSGSQRLFASFRTDGLFAPLTLKSRRGRGIVVKVDDVD). The Nuclear localization signal motif lies at 267-275 (RKRDRKDDL). The RNA binding domain signature appears at 301–319 (EREEWTKTREDMEKHLRKL).

In terms of assembly, subunit of the plastid-encoded RNA polymerase (PEP) complex. Component of a large nuclear subcomplex that may include other PEP subunits (e.g. PTAC12/HMR/PAP5, PTAC14/PAP7 and PTAC7/PAP12). Binds directly to PTAC12/HMR/PAP5 in the nucleus. Interacts with MTERF5. As to expression, mostly expressed in rosette leaves, stems and flowers, and, to a lower extent, in roots and cauline leaves.

Its subcellular location is the plastid. The protein localises to the chloroplast. It localises to the chloroplast thylakoid. The protein resides in the nucleus. It is found in the nucleoplasm. Functionally, essential protein involved in plastid gene expression and in chloroplast biogenesis. Links photomorphogenesis and chloroplast biogenesis through its dual localization; required for the formation of late photobodies in the nucleus, as well as for phytochrome B-mediated signaling cascade and subsequent reshaping of the plastid-encoded RNA polymerase (PEP) activity. Binds RNA via specific recognition motifs of viral origin. Recruited by MTERF5 to the transcriptionally paused region of psbEFLJ. Promotes leaf greening. This Arabidopsis thaliana (Mouse-ear cress) protein is PLASTID TRANSCRIPTIONALLY ACTIVE protein 6, chloroplastic.